The chain runs to 553 residues: Chaperonin GroEL 1 (553 aa).

Residues 29–32 (TIGP), 86–90 (DGTTT), glycine 413, 476–478 (NAL), and aspartate 492 contribute to the ATP site. Residues 521-542 (KPEPPAAPAPGGDPMGGMGGMG) form a disordered region. The span at 533–542 (DPMGGMGGMG) shows a compositional bias: gly residues.

Belongs to the chaperonin (HSP60) family. In terms of assembly, forms a cylinder of 14 subunits composed of two heptameric rings stacked back-to-back. Interacts with the co-chaperonin GroES.

The protein localises to the cytoplasm. The enzyme catalyses ATP + H2O + a folded polypeptide = ADP + phosphate + an unfolded polypeptide.. Its function is as follows. Together with its co-chaperonin GroES, plays an essential role in assisting protein folding. The GroEL-GroES system forms a nano-cage that allows encapsulation of the non-native substrate proteins and provides a physical environment optimized to promote and accelerate protein folding. The chain is Chaperonin GroEL 1 from Synechococcus sp. (strain WH7803).